The chain runs to 39 residues: Fructose 5-dehydrogenase [NADP(+)] (39 aa).

The catalysed reaction is D-fructose + NADP(+) = 5-dehydro-D-fructose + NADPH + H(+). This is Fructose 5-dehydrogenase [NADP(+)] from Erwinia citreus.